A 243-amino-acid polypeptide reads, in one-letter code: Chromosome partition protein MukE (243 aa).

The interval 214–243 (DSLALEKQADLNEVDDNDELEDELDDEEHA) is disordered. The span at 225-243 (NEVDDNDELEDELDDEEHA) shows a compositional bias: acidic residues.

This sequence belongs to the MukE family. As to quaternary structure, interacts, and probably forms a ternary complex, with MukF and MukB. The complex formation is stimulated by calcium or magnesium.

The protein resides in the cytoplasm. It localises to the nucleoid. In terms of biological role, involved in chromosome condensation, segregation and cell cycle progression. May participate in facilitating chromosome segregation by condensation DNA from both sides of a centrally located replisome during cell division. Probably acts via its interaction with MukB and MukF. The protein is Chromosome partition protein MukE of Pasteurella multocida (strain Pm70).